Here is a 156-residue protein sequence, read N- to C-terminus: MNINATLLGQTVAFIIFVWFCMKFVWPPLMNAIEERQKRIADGLADADRAVKDLELAQSKATDQLKDAKATANEIIEQANKRKAQIVDEAKAEADAERAKIIAQGQAEIEAERNRVKEDLRKQVATLAIYGAEKILERSIDEAAHSDIVNKLVAEL.

The helical transmembrane segment at 13–33 (AFIIFVWFCMKFVWPPLMNAI) threads the bilayer.

The protein belongs to the ATPase B chain family. In terms of assembly, F-type ATPases have 2 components, F(1) - the catalytic core - and F(0) - the membrane proton channel. F(1) has five subunits: alpha(3), beta(3), gamma(1), delta(1), epsilon(1). F(0) has three main subunits: a(1), b(2) and c(10-14). The alpha and beta chains form an alternating ring which encloses part of the gamma chain. F(1) is attached to F(0) by a central stalk formed by the gamma and epsilon chains, while a peripheral stalk is formed by the delta and b chains.

It localises to the cell inner membrane. Functionally, f(1)F(0) ATP synthase produces ATP from ADP in the presence of a proton or sodium gradient. F-type ATPases consist of two structural domains, F(1) containing the extramembraneous catalytic core and F(0) containing the membrane proton channel, linked together by a central stalk and a peripheral stalk. During catalysis, ATP synthesis in the catalytic domain of F(1) is coupled via a rotary mechanism of the central stalk subunits to proton translocation. Its function is as follows. Component of the F(0) channel, it forms part of the peripheral stalk, linking F(1) to F(0). The chain is ATP synthase subunit b from Shewanella sediminis (strain HAW-EB3).